We begin with the raw amino-acid sequence, 439 residues long: Enolase 1-1 (439 aa).

Threonine 85 carries the post-translational modification Phosphothreonine. 2 residues coordinate substrate: histidine 159 and glutamate 168. Glutamate 211 serves as the catalytic Proton donor. A Mg(2+)-binding site is contributed by aspartate 246. 2 positions are modified to phosphoserine: serine 249 and serine 250. Tyrosine 253 carries the post-translational modification Phosphotyrosine. Substrate is bound by residues glutamate 295 and aspartate 320. Mg(2+) is bound by residues glutamate 295 and aspartate 320. The Proton acceptor role is filled by lysine 345. Serine 351 carries the post-translational modification Phosphoserine. Threonine 353 is modified (phosphothreonine). The residue at position 355 (serine 355) is a Phosphoserine. Residues 372–375 and lysine 396 each bind substrate; that span reads SHRS. Serine 421 is modified (phosphoserine).

Belongs to the enolase family. In terms of assembly, homodimer. It depends on Mg(2+) as a cofactor.

The protein resides in the cytoplasm. It catalyses the reaction (2R)-2-phosphoglycerate = phosphoenolpyruvate + H2O. Its pathway is carbohydrate degradation; glycolysis; pyruvate from D-glyceraldehyde 3-phosphate: step 4/5. This is Enolase 1-1 (eno101) from Schizosaccharomyces pombe (strain 972 / ATCC 24843) (Fission yeast).